The chain runs to 529 residues: uncharacterized protein (529 aa).

2 consecutive ABC transporter domains span residues 6-257 (LAIE…QKLL) and 287-526 (IRKG…RQLL). Residues 42-49 (GESGSGKS) and 319-326 (GESGSGKS) contribute to the ATP site.

It belongs to the ABC transporter superfamily.

This is an uncharacterized protein from Escherichia coli (strain K12).